The chain runs to 24 residues: Brevinin-1Pa (24 aa).

An intrachain disulfide couples cysteine 18 to cysteine 24.

In terms of tissue distribution, expressed by the skin glands.

Its subcellular location is the secreted. Antibacterial activity against Gram-positive bacterium S.aureus and Gram-negative bacterium E.coli. Has activity against C.albicans. This Lithobates pipiens (Northern leopard frog) protein is Brevinin-1Pa.